Consider the following 177-residue polypeptide: Peptidyl-tRNA hydrolase (177 aa).

Tyrosine 12 provides a ligand contact to tRNA. Catalysis depends on histidine 17, which acts as the Proton acceptor. Residues phenylalanine 63, asparagine 65, and asparagine 111 each coordinate tRNA.

It belongs to the PTH family. In terms of assembly, monomer.

Its subcellular location is the cytoplasm. The catalysed reaction is an N-acyl-L-alpha-aminoacyl-tRNA + H2O = an N-acyl-L-amino acid + a tRNA + H(+). Its function is as follows. Hydrolyzes ribosome-free peptidyl-tRNAs (with 1 or more amino acids incorporated), which drop off the ribosome during protein synthesis, or as a result of ribosome stalling. Catalyzes the release of premature peptidyl moieties from peptidyl-tRNA molecules trapped in stalled 50S ribosomal subunits, and thus maintains levels of free tRNAs and 50S ribosomes. This Buchnera aphidicola subsp. Acyrthosiphon pisum (strain 5A) protein is Peptidyl-tRNA hydrolase.